We begin with the raw amino-acid sequence, 356 residues long: Guanine nucleotide-binding protein alpha-15 subunit (356 aa).

The N-myristoyl glycine moiety is linked to residue glycine 2. Cysteine 5 is lipidated: S-palmitoyl cysteine. A G-alpha domain is found at 33–356 (GNQKLLLLGT…GRNLRGTGME (324 aa)). The segment at 36–49 (KLLLLGTGECGKST) is G1 motif. GTP-binding positions include 41-48 (GTGECGKS), 177-183 (LRIRIPT), 202-206 (DVGGQ), 271-274 (NKRD), and alanine 328. Mg(2+)-binding residues include serine 48 and threonine 183. The G2 motif stretch occupies residues 175–183 (DMLRIRIPT). The interval 198–207 (FRIYDVGGQR) is G3 motif. Residues 267-274 (ILFLNKRD) are G4 motif. The tract at residues 326-331 (TCATDT) is G5 motif.

It belongs to the G-alpha family. As to quaternary structure, g proteins are composed of 3 units; alpha, beta and gamma. The alpha chain contains the guanine nucleotide binding site.

Its function is as follows. Guanine nucleotide-binding proteins (G proteins) are involved as modulators or transducers in various transmembrane signaling systems. In Caenorhabditis elegans, this protein is Guanine nucleotide-binding protein alpha-15 subunit (gpa-15).